The primary structure comprises 81 residues: Photosystem I iron-sulfur center (81 aa).

2 consecutive 4Fe-4S ferredoxin-type domains span residues A2–W31 and I39–Y68. Residues C11, C14, C17, C21, C48, C51, C54, and C58 each coordinate [4Fe-4S] cluster.

As to quaternary structure, the eukaryotic PSI reaction center is composed of at least 11 subunits. The cofactor is [4Fe-4S] cluster.

The protein resides in the plastid. Its subcellular location is the chloroplast thylakoid membrane. The enzyme catalyses reduced [plastocyanin] + hnu + oxidized [2Fe-2S]-[ferredoxin] = oxidized [plastocyanin] + reduced [2Fe-2S]-[ferredoxin]. Its function is as follows. Apoprotein for the two 4Fe-4S centers FA and FB of photosystem I (PSI); essential for photochemical activity. FB is the terminal electron acceptor of PSI, donating electrons to ferredoxin. The C-terminus interacts with PsaA/B/D and helps assemble the protein into the PSI complex. Required for binding of PsaD and PsaE to PSI. PSI is a plastocyanin-ferredoxin oxidoreductase, converting photonic excitation into a charge separation, which transfers an electron from the donor P700 chlorophyll pair to the spectroscopically characterized acceptors A0, A1, FX, FA and FB in turn. In Chlorokybus atmophyticus (Soil alga), this protein is Photosystem I iron-sulfur center.